The chain runs to 287 residues: Phosphatidylserine decarboxylase proenzyme (287 aa).

Active-site charge relay system; for autoendoproteolytic cleavage activity residues include aspartate 86, histidine 143, and serine 250. Serine 250 serves as the catalytic Schiff-base intermediate with substrate; via pyruvic acid; for decarboxylase activity. Serine 250 carries the pyruvic acid (Ser); by autocatalysis modification.

Belongs to the phosphatidylserine decarboxylase family. PSD-B subfamily. Prokaryotic type I sub-subfamily. In terms of assembly, heterodimer of a large membrane-associated beta subunit and a small pyruvoyl-containing alpha subunit. Pyruvate is required as a cofactor. Post-translationally, is synthesized initially as an inactive proenzyme. Formation of the active enzyme involves a self-maturation process in which the active site pyruvoyl group is generated from an internal serine residue via an autocatalytic post-translational modification. Two non-identical subunits are generated from the proenzyme in this reaction, and the pyruvate is formed at the N-terminus of the alpha chain, which is derived from the carboxyl end of the proenzyme. The autoendoproteolytic cleavage occurs by a canonical serine protease mechanism, in which the side chain hydroxyl group of the serine supplies its oxygen atom to form the C-terminus of the beta chain, while the remainder of the serine residue undergoes an oxidative deamination to produce ammonia and the pyruvoyl prosthetic group on the alpha chain. During this reaction, the Ser that is part of the protease active site of the proenzyme becomes the pyruvoyl prosthetic group, which constitutes an essential element of the active site of the mature decarboxylase.

Its subcellular location is the cell membrane. The enzyme catalyses a 1,2-diacyl-sn-glycero-3-phospho-L-serine + H(+) = a 1,2-diacyl-sn-glycero-3-phosphoethanolamine + CO2. It functions in the pathway phospholipid metabolism; phosphatidylethanolamine biosynthesis; phosphatidylethanolamine from CDP-diacylglycerol: step 2/2. Its function is as follows. Catalyzes the formation of phosphatidylethanolamine (PtdEtn) from phosphatidylserine (PtdSer). This chain is Phosphatidylserine decarboxylase proenzyme, found in Wigglesworthia glossinidia brevipalpis.